The sequence spans 342 residues: Metalloendoproteinase 4-MMP (342 aa).

A signal peptide spans 1–34 (MHHHHHPCNRKPFTTIFSFFLLYLNLHNQQIIEA). Positions 35 to 124 (RNPSQFTTNP…KTAPFHTGKK (90 aa)) are cleaved as a propeptide — activation peptide. Positions 104 to 111 (PRCGFPDD) match the Cysteine switch motif. 2 residues coordinate Zn(2+): cysteine 106 and histidine 252. Residue glutamate 253 is part of the active site. Residues histidine 256 and histidine 262 each contribute to the Zn(2+) site. The N-linked (GlcNAc...) asparagine glycan is linked to asparagine 300. Aspartate 317 carries the GPI-anchor amidated aspartate lipid modification. Residues 318–342 (GSRIRSQGMIYSTLSTVIALCFLNW) constitute a propeptide, removed in mature form.

This sequence belongs to the peptidase M10A family. Matrix metalloproteinases (MMPs) subfamily. It depends on Zn(2+) as a cofactor. In terms of tissue distribution, mostly expressed in flowers and stems, and, to a lower extent, in leaves and roots.

Its subcellular location is the cell membrane. Repressed by acetohydroxamic acid (AHA). Matrix metalloproteinases (MMPs) or matrixins may play a role in the degradation and remodeling of the extracellular matrix (ECM) during development or in response to stresses. Active on myelin basic protein (MBP) and, to some extent, on McaPLGLDpaAR-NH(2) (QF24) and beta-casein. The polypeptide is Metalloendoproteinase 4-MMP (Arabidopsis thaliana (Mouse-ear cress)).